The sequence spans 461 residues: Complement C1r subcomponent-like protein (461 aa).

Positions 1–22 (MCWLLLWGILHTCPTQASVLLA) are cleaved as a signal peptide. The CUB domain maps to 23-139 (QQFPQQLTSP…KGFLALYQAA (117 aa)). 2 disulfide bridges follow: Cys-71/Cys-89 and Cys-164/Cys-197. Residues 138-199 (AAVSQPNGDA…RGEEVPECVP (62 aa)) enclose the Sushi domain. The Peptidase S1 domain occupies 214–453 (TFGSSRAKPG…YVDWIKGVIE (240 aa)). His-252 functions as the Charge relay system in the catalytic mechanism. Asn-265 is a glycosylation site (N-linked (GlcNAc...) asparagine). Asp-308 serves as the catalytic Charge relay system. A glycan (N-linked (GlcNAc...) asparagine) is linked at Asn-332. 2 disulfide bridges follow: Cys-371–Cys-390 and Cys-401–Cys-431. Residue Ser-405 is the Charge relay system of the active site.

This sequence belongs to the peptidase S1 family.

It is found in the secreted. In terms of biological role, mediates the proteolytic cleavage of HP/haptoglobin in the endoplasmic reticulum. The protein is Complement C1r subcomponent-like protein (C1rl) of Rattus norvegicus (Rat).